Reading from the N-terminus, the 442-residue chain is Probable D-serine dehydratase (442 aa).

At Lys111 the chain carries N6-(pyridoxal phosphate)lysine.

This sequence belongs to the serine/threonine dehydratase family. DsdA subfamily. It depends on pyridoxal 5'-phosphate as a cofactor.

The catalysed reaction is D-serine = pyruvate + NH4(+). This chain is Probable D-serine dehydratase, found in Sinorhizobium medicae (strain WSM419) (Ensifer medicae).